The chain runs to 133 residues: Small ribosomal subunit protein uS11 (133 aa).

The protein belongs to the universal ribosomal protein uS11 family. As to quaternary structure, part of the 30S ribosomal subunit.

Located on the platform of the 30S subunit. The sequence is that of Small ribosomal subunit protein uS11 from Pyrobaculum aerophilum (strain ATCC 51768 / DSM 7523 / JCM 9630 / CIP 104966 / NBRC 100827 / IM2).